We begin with the raw amino-acid sequence, 631 residues long: Chaperone protein DnaK (631 aa).

Position 197 is a phosphothreonine; by autocatalysis (threonine 197). A disordered region spans residues 599 to 631 (AQSDAGAAGSASEENTTSNEKVVDADFEDVEKK). Residues 603-612 (AGAAGSASEE) are compositionally biased toward low complexity.

Belongs to the heat shock protein 70 family.

Acts as a chaperone. The polypeptide is Chaperone protein DnaK (Rickettsia bellii (strain RML369-C)).